The following is a 199-amino-acid chain: Prostatic spermine-binding protein (199 aa).

A signal peptide spans 1 to 18 (MLLLLTLAFLASPTCRAQ). In terms of domain architecture, Jacalin-type lectin spans 19–151 (NVLGNAAGKY…VRGIGFKWGN (133 aa)). Asn-62 is a glycosylation site (N-linked (GlcNAc...) asparagine). A disordered region spans residues 159–199 (HYNNKEDKADNKDADNKDADNKDDGDEDDDGNDDDDQKDES). Residues 160–180 (YNNKEDKADNKDADNKDADNK) are compositionally biased toward basic and acidic residues. The span at 181 to 199 (DDGDEDDDGNDDDDQKDES) shows a compositional bias: acidic residues.

The protein to rat SBP. Prostate.

In terms of biological role, this protein seems to be functional equivalent to rat prostatic spermine-binding protein, which is involved in polyamine binding. This Mus musculus (Mouse) protein is Prostatic spermine-binding protein (Sbp).